The sequence spans 2769 residues: Teneurin-4 (2769 aa).

Residues 1-22 are compositionally biased toward basic and acidic residues; the sequence is MDVKERKPYRSLTRRRDAERRY. The interval 1 to 45 is disordered; it reads MDVKERKPYRSLTRRRDAERRYTSSSADSEEGKAPQKSYSSSETL. The region spanning 1 to 341 is the Teneurin N-terminal domain; it reads MDVKERKPYR…KPSKYCNWKC (341 aa). At 1–345 the chain is on the cytoplasmic side; the sequence is MDVKERKPYR…YCNWKCAALS (345 aa). A Phosphoserine modification is found at Ser124. The tract at residues 130–233 is disordered; it reads RLWGRSTRSG…PPAGGAQEPA (104 aa). Low complexity predominate over residues 134-155; the sequence is RSTRSGRSSCLSSRANSNLTLT. Basic and acidic residues predominate over residues 156–166; that stretch reads DTEHENTETDH. A Phosphothreonine modification is found at Thr178. Residues 187-211 are compositionally biased toward polar residues; the sequence is HTPNQHHAASINSLNRGNFTPRSNP. Residues 346–366 form a helical membrane-spanning segment; it reads AIVISATLVILLAYFVAMHLF. The Extracellular segment spans residues 367–2769; the sequence is GLNWHLQPME…FMRQSEMGRR (2403 aa). The segment at 400–426 is disordered; that stretch reads PSGGTGLETPDRKGKGTTEGKPSSFFP. Positions 408 to 417 are enriched in basic and acidic residues; the sequence is TPDRKGKGTT. N-linked (GlcNAc...) asparagine glycosylation occurs at Asn467. Residues 507–526 form a disordered region; that stretch reads ARSLEGTPRQSRGTVPPSSH. The span at 514–526 shows a compositional bias: polar residues; sequence PRQSRGTVPPSSH. 8 EGF-like domains span residues 562 to 593, 594 to 624, 626 to 658, 659 to 690, 692 to 725, 726 to 757, 758 to 787, and 788 to 831; these read SVDNCPSNCYGNGDCISGTCHCFLGFLGPDCG, RASCPVLCSGNGQYMKGRCLCHSGWKGAECD, PTNQCIDVACSNHGTCITGTCICNPGYKGESCE, EVDCMDPTCSGRGVCVRGECHCSVGWGGTNCE, PRATCLDQCSGHGTFLPDTGLCSCDPSWTGHDCS, IEICAADCGGHGVCVGGTCRCEDGWMGAACDQ, RACHPRCAEHGTCRDGKCECSPGWNGEHCT, and IAHY…AGCD. Disulfide bonds link Cys566–Cys576, Cys570–Cys581, Cys583–Cys592, Cys601–Cys612, Cys614–Cys623, Cys630–Cys641, Cys635–Cys646, Cys648–Cys657, Cys662–Cys673, Cys667–Cys678, Cys680–Cys689, Cys700–Cys713, Cys715–Cys724, Cys729–Cys739, Cys733–Cys744, Cys746–Cys755, Cys760–Cys770, Cys764–Cys775, Cys777–Cys786, Cys800–Cys810, Cys804–Cys819, and Cys821–Cys830. 2 N-linked (GlcNAc...) asparagine glycosylation sites follow: Asn940 and Asn1259. NHL repeat units follow at residues 1216–1259, 1264–1308, 1334–1378, 1393–1444, and 1523–1566; these read SCPS…PSGN, LELR…IKST, TRCG…NGII, LSCD…VAGR, and CFSG…IRKN. The stretch at 1576–1595 is one YD 1 repeat; sequence YELSSPIDQELYLFDTTGKH. A glycan (N-linked (GlcNAc...) asparagine) is linked at Asn1609. YD repeat units follow at residues 1612–1632, 1675–1694, and 1695–1717; these read YTGDGDITLITDNNGNMVNVR, YHGNSGLLATKSNENGWTTF, and YEYDSFGRLTNVTFPTGQVSSFR. Asn1705, Asn1741, Asn1799, and Asn1884 each carry an N-linked (GlcNAc...) asparagine glycan. YD repeat units follow at residues 1887 to 1906, 1928 to 1946, 1947 to 1967, 1974 to 1991, 1992 to 2013, 2014 to 2031, 2034 to 2054, 2057 to 2077, 2085 to 2104, 2110 to 2127, 2128 to 2154, 2156 to 2169, 2170 to 2193, 2196 to 2216, 2217 to 2237, 2239 to 2259, 2271 to 2291, and 2293 to 2313; these read YSPGGYIAGIQRGIMSERME, YLEKSMVLLLHSQRQYIFE, FDKNDRLSSVTMPNVARQTLE, YYRNIYQPPEGNASVIQD, FTEDGHLLHTFYLGTGRRVIYK, YGKLSKLAETLYDTTKVS, YDETAGMLKTINLQNEGFTCT, YRQIGPLIDRQIFRFTEEGMV, YDNSFRVTSMQAVINETPLP, YDDVSGKTEQFGKFGVIY, YDINQIITTAVMTHTKHFDAYGRMKEV, YEIFRSLMYWMTVQ, YDNMGRVVKKELKVGPYANTTRYS, YDADGQLQTVSINDKPLWRYS, YDLNGNLHLLSPGNSARLTPL, YDIRDRITRLGDVQYKMDEDG, YNSAGLLIKAYNRAGSWSVRY, and YDGLGRRVSSKSSHSHHLQFF. Residue Asn1985 is glycosylated (N-linked (GlcNAc...) asparagine). The N-linked (GlcNAc...) asparagine glycan is linked to Asn2188. Asn2328 carries an N-linked (GlcNAc...) asparagine glycan. The YD 23 repeat unit spans residues 2339–2380; sequence YDLQGHLFAMELSSGDEFYIACDNIGTPLAVFSGTGLMIKQI. Asn2646 carries an N-linked (GlcNAc...) asparagine glycan.

It belongs to the tenascin family. Teneurin subfamily. In terms of assembly, homodimer; disulfide-linked. May also form heterodimer with either TENM1 or TENM2 or TENM3.

Its subcellular location is the cell membrane. It localises to the cell projection. It is found in the nucleus. The protein resides in the cytoplasm. Its function is as follows. Involved in neural development, regulating the establishment of proper connectivity within the nervous system. Plays a role in the establishment of the anterior-posterior axis during gastrulation. Regulates the differentiation and cellular process formation of oligodendrocytes and myelination of small-diameter axons in the central nervous system (CNS). Promotes activation of focal adhesion kinase. May function as a cellular signal transducer. The chain is Teneurin-4 (TENM4) from Homo sapiens (Human).